The primary structure comprises 278 residues: Shikimate dehydrogenase (NADP(+)) (278 aa).

Residues 19-21 (SRS) and T66 contribute to the shikimate site. The active-site Proton acceptor is the K70. Positions 91 and 106 each coordinate shikimate. NADP(+) is bound by residues 129–133 (GAGGA) and F221. Y223 lines the shikimate pocket. G242 lines the NADP(+) pocket.

It belongs to the shikimate dehydrogenase family. Homodimer.

It carries out the reaction shikimate + NADP(+) = 3-dehydroshikimate + NADPH + H(+). It functions in the pathway metabolic intermediate biosynthesis; chorismate biosynthesis; chorismate from D-erythrose 4-phosphate and phosphoenolpyruvate: step 4/7. Involved in the biosynthesis of the chorismate, which leads to the biosynthesis of aromatic amino acids. Catalyzes the reversible NADPH linked reduction of 3-dehydroshikimate (DHSA) to yield shikimate (SA). The sequence is that of Shikimate dehydrogenase (NADP(+)) from Anaeromyxobacter dehalogenans (strain 2CP-1 / ATCC BAA-258).